Here is a 136-residue protein sequence, read N- to C-terminus: Transcription antitermination protein NusB (136 aa).

This sequence belongs to the NusB family.

In terms of biological role, involved in transcription antitermination. Required for transcription of ribosomal RNA (rRNA) genes. Binds specifically to the boxA antiterminator sequence of the ribosomal RNA (rrn) operons. In Treponema denticola (strain ATCC 35405 / DSM 14222 / CIP 103919 / JCM 8153 / KCTC 15104), this protein is Transcription antitermination protein NusB.